The sequence spans 322 residues: N-acetyl-gamma-glutamyl-phosphate reductase (322 aa).

The active site involves C132.

The protein belongs to the NAGSA dehydrogenase family. Type 1 subfamily.

It localises to the cytoplasm. The enzyme catalyses N-acetyl-L-glutamate 5-semialdehyde + phosphate + NADP(+) = N-acetyl-L-glutamyl 5-phosphate + NADPH + H(+). It participates in amino-acid biosynthesis; L-arginine biosynthesis; N(2)-acetyl-L-ornithine from L-glutamate: step 3/4. Its function is as follows. Catalyzes the NADPH-dependent reduction of N-acetyl-5-glutamyl phosphate to yield N-acetyl-L-glutamate 5-semialdehyde. In Phocaeicola vulgatus (strain ATCC 8482 / DSM 1447 / JCM 5826 / CCUG 4940 / NBRC 14291 / NCTC 11154) (Bacteroides vulgatus), this protein is N-acetyl-gamma-glutamyl-phosphate reductase.